We begin with the raw amino-acid sequence, 205 residues long: Small ribosomal subunit protein uS5 (205 aa).

The tract at residues 1-25 is disordered; that stretch reads MSGAQRGQRGGERRGGRDDRRGQGA. The span at 9 to 24 shows a compositional bias: basic and acidic residues; it reads RGGERRGGRDDRRGQG. The S5 DRBM domain maps to 30 to 93; that stretch reads YIERVVAINR…EEAKKHFFRV (64 aa).

It belongs to the universal ribosomal protein uS5 family. In terms of assembly, part of the 30S ribosomal subunit. Contacts proteins S4 and S8.

Its function is as follows. With S4 and S12 plays an important role in translational accuracy. Located at the back of the 30S subunit body where it stabilizes the conformation of the head with respect to the body. The chain is Small ribosomal subunit protein uS5 from Nocardioides sp. (strain ATCC BAA-499 / JS614).